Reading from the N-terminus, the 253-residue chain is Tetraspanin-11 (253 aa).

4 helical membrane-spanning segments follow: residues 19 to 39 (LLFI…AVGI), 63 to 83 (VLIF…GAII), 93 to 113 (YFCL…LAHV), and 220 to 240 (LLLM…GMVL).

It belongs to the tetraspanin (TM4SF) family.

It localises to the membrane. This chain is Tetraspanin-11 (Tspan11), found in Rattus norvegicus (Rat).